The following is a 236-amino-acid chain: Purine nucleoside phosphorylase DeoD-type (236 aa).

H5 provides a ligand contact to a purine D-ribonucleoside. Residues G21, R25, R44, and 88–91 contribute to the phosphate site; that span reads RVGT. A purine D-ribonucleoside-binding positions include 180-182 and 204-205; these read EME and SD. The active-site Proton donor is D205.

Belongs to the PNP/UDP phosphorylase family. In terms of assembly, homohexamer; trimer of homodimers.

The catalysed reaction is a purine D-ribonucleoside + phosphate = a purine nucleobase + alpha-D-ribose 1-phosphate. The enzyme catalyses a purine 2'-deoxy-D-ribonucleoside + phosphate = a purine nucleobase + 2-deoxy-alpha-D-ribose 1-phosphate. Catalyzes the reversible phosphorolytic breakdown of the N-glycosidic bond in the beta-(deoxy)ribonucleoside molecules, with the formation of the corresponding free purine bases and pentose-1-phosphate. The protein is Purine nucleoside phosphorylase DeoD-type of Shewanella sp. (strain MR-4).